We begin with the raw amino-acid sequence, 68 residues long: Large ribosomal subunit protein bL33c (68 aa).

The protein belongs to the bacterial ribosomal protein bL33 family.

The protein resides in the plastid. This is Large ribosomal subunit protein bL33c from Cuscuta reflexa (Southern Asian dodder).